Here is a 319-residue protein sequence, read N- to C-terminus: 7,8-didemethyl-8-hydroxy-5-deazariboflavin synthase (319 aa).

Residues 5 to 236 (VTYSPAYTIV…SNITLQIPPN (232 aa)) form the Radical SAM core domain. Residues cysteine 19, cysteine 23, and cysteine 26 each coordinate [4Fe-4S] cluster.

It belongs to the radical SAM superfamily. CofG family. As to quaternary structure, consists of two subunits, CofG and CofH. [4Fe-4S] cluster serves as cofactor.

The enzyme catalyses 5-amino-5-(4-hydroxybenzyl)-6-(D-ribitylimino)-5,6-dihydrouracil + S-adenosyl-L-methionine = 7,8-didemethyl-8-hydroxy-5-deazariboflavin + 5'-deoxyadenosine + L-methionine + NH4(+) + H(+). Its pathway is cofactor biosynthesis; coenzyme F0 biosynthesis. Functionally, catalyzes the radical-mediated synthesis of 7,8-didemethyl-8-hydroxy-5-deazariboflavin from 5-amino-5-(4-hydroxybenzyl)-6-(D-ribitylimino)-5,6-dihydrouracil. This is 7,8-didemethyl-8-hydroxy-5-deazariboflavin synthase from Trichodesmium erythraeum (strain IMS101).